The sequence spans 1229 residues: Phosphorylase b kinase regulatory subunit alpha, liver isoform (1229 aa).

A compositionally biased stretch (acidic residues) spans 625–646 (DSLLEDDEEQEEEEEDKFEDDY). Residues 625-648 (DSLLEDDEEQEEEEEDKFEDDYNN) are disordered. A calmodulin-binding region spans residues 825 to 855 (LEELYIQAGACKEWGLIRYISGILRKRVEVL). The disordered stretch occupies residues 1024 to 1050 (EIKQRCSSPSTPSGILSPVGPGPADGQ). Positions 1028–1037 (RCSSPSTPSG) are enriched in polar residues. Residues 1052–1092 (HWVERQGQWLRRRRLDGAINRVPVGFYQKVWKILQKCHGLS) form a calmodulin-binding region. A lipid anchor (S-farnesyl cysteine) is attached at C1226.

It belongs to the phosphorylase b kinase regulatory chain family. As to quaternary structure, polymer of 16 chains, four each of alpha, beta, gamma, and delta. Alpha and beta are regulatory chains, gamma is the catalytic chain, and delta is calmodulin. Post-translationally, although the final Cys may be farnesylated, the terminal tripeptide is probably not removed, and the C-terminus is not methylated.

The protein localises to the cell membrane. It functions in the pathway glycan biosynthesis; glycogen metabolism. Its activity is regulated as follows. By phosphorylation of various serine residues and by calcium. In terms of biological role, phosphorylase b kinase catalyzes the phosphorylation of serine in certain substrates, including troponin I. The alpha chain may bind calmodulin. The protein is Phosphorylase b kinase regulatory subunit alpha, liver isoform (phka2) of Takifugu rubripes (Japanese pufferfish).